The following is a 450-amino-acid chain: Cell division cycle 20.5, cofactor of APC complex (450 aa).

WD repeat units lie at residues 129–166 (ADDFYLNLLDWGSSNVLAIALGDTVYLWDASSGSTYKL), 171–210 (EEEGPVTSINWTQDGLDLAIGLDNSEVQLWDCVSNRQVRT), 214–251 (GHESRVGSLAWNNHILTTGGMDGKIVNNDVRIRSSIVE), 255–294 (GHTEEVCGLKWSESGKKLASGGNDNVVHIWDHRSVASSNP), 304–346 (EHTA…CLNS), 348–389 (ETGS…KMAE), and 392–431 (GHTSRVLFMAQSPDGCTVASAAGDETLRLWNVFGEPPKTT).

The protein belongs to the WD repeat CDC20/Fizzy family. As to quaternary structure, the APC/C is composed of at least 11 subunits that stay tightly associated throughout the cell cycle. Binds to GIG1 and PYM. Part of the mitotic checkpoint complex (MCC); interacts with MAD2 and BUB1.

It localises to the nucleus. Its pathway is protein modification; protein ubiquitination. Component of the anaphase promoting complex/cyclosome (APC/C), a cell cycle-regulated E3 ubiquitin-protein ligase complex that controls progression through mitosis and the G1 phase of the cell cycle. The polypeptide is Cell division cycle 20.5, cofactor of APC complex (CDC20-5) (Arabidopsis thaliana (Mouse-ear cress)).